A 195-amino-acid chain; its full sequence is Imidazoleglycerol-phosphate dehydratase (195 aa).

Belongs to the imidazoleglycerol-phosphate dehydratase family.

The protein resides in the cytoplasm. It carries out the reaction D-erythro-1-(imidazol-4-yl)glycerol 3-phosphate = 3-(imidazol-4-yl)-2-oxopropyl phosphate + H2O. The protein operates within amino-acid biosynthesis; L-histidine biosynthesis; L-histidine from 5-phospho-alpha-D-ribose 1-diphosphate: step 6/9. This Sphingopyxis alaskensis (strain DSM 13593 / LMG 18877 / RB2256) (Sphingomonas alaskensis) protein is Imidazoleglycerol-phosphate dehydratase.